The primary structure comprises 299 residues: tRNA dimethylallyltransferase (299 aa).

11–18 serves as a coordination point for ATP; sequence GPTAVGKT. Residue 13-18 participates in substrate binding; that stretch reads TAVGKT. The interval 36–39 is interaction with substrate tRNA; the sequence is DSQQ.

This sequence belongs to the IPP transferase family. Monomer. The cofactor is Mg(2+).

The catalysed reaction is adenosine(37) in tRNA + dimethylallyl diphosphate = N(6)-dimethylallyladenosine(37) in tRNA + diphosphate. Functionally, catalyzes the transfer of a dimethylallyl group onto the adenine at position 37 in tRNAs that read codons beginning with uridine, leading to the formation of N6-(dimethylallyl)adenosine (i(6)A). The polypeptide is tRNA dimethylallyltransferase (Streptococcus pyogenes serotype M4 (strain MGAS10750)).